The following is a 69-amino-acid chain: U-scoloptoxin(21)-Sm2a (69 aa).

The signal sequence occupies residues 1–21 (MFFLGFIIVCASEEQSDNRLP). The tract at residues 46–69 (ANDPNGPGRRRRSPIVREEILRHP) is disordered. Residues 60 to 69 (IVREEILRHP) are compositionally biased toward basic and acidic residues.

It belongs to the scoloptoxin-21 family. As to expression, expressed by the venom gland.

The protein localises to the secreted. The sequence is that of U-scoloptoxin(21)-Sm2a from Scolopendra morsitans (Tanzanian blue ringleg centipede).